A 228-amino-acid chain; its full sequence is Large ribosomal subunit protein uL1 (228 aa).

This sequence belongs to the universal ribosomal protein uL1 family. Part of the 50S ribosomal subunit.

Its function is as follows. Binds directly to 23S rRNA. The L1 stalk is quite mobile in the ribosome, and is involved in E site tRNA release. Functionally, protein L1 is also a translational repressor protein, it controls the translation of the L11 operon by binding to its mRNA. This is Large ribosomal subunit protein uL1 from Clavibacter michiganensis subsp. michiganensis (strain NCPPB 382).